Reading from the N-terminus, the 476-residue chain is PRAME family member 6 (476 aa).

An LRR 1; degenerate repeat occupies 97-124 (RWKLQVLDLQDVCENFWMVWSEAMARGC). The LRR 2; degenerate repeat unit spans residues 179–203 (HLCCKKLKILGMPFRNIRSILKMVN). Residues 204 to 230 (LDCIQEVEVNCKWVLPILTQFTPYLGH) form an LRR 3; degenerate repeat. The stretch at 231-266 (MRNLQKLVLSHMDVSRYVSPEQKKEIVTQFTTQFLK) is one LRR 4; degenerate repeat. LRR repeat units lie at residues 267 to 292 (LCCL…LSCL), 293 to 324 (KTSL…SQLK), 325 to 345 (TLDL…QILL), 349 to 376 (AATL…ALSR), and 377 to 401 (CFEL…LLSH).

Belongs to the PRAME family. As to quaternary structure, component of a CRL2 E3 ubiquitin-protein ligase complex, also named ECS (Elongin BC-CUL2/5-SOCS-box protein) complex, composed of CUL2, Elongin BC (ELOB and ELOC), RBX1 and substrate-specific adapter PRAMEF6.

It participates in protein modification; protein ubiquitination. Its function is as follows. Substrate-recognition component of a Cul2-RING (CRL2) E3 ubiquitin-protein ligase complex, which mediates ubiquitination of target proteins, leading to their degradation. The CRL2(PRAMEF6) complex mediates ubiquitination and degradation of truncated MSRB1/SEPX1 selenoproteins produced by failed UGA/Sec decoding. The chain is PRAME family member 6 from Homo sapiens (Human).